A 338-amino-acid polypeptide reads, in one-letter code: Lipoate-protein ligase A (338 aa).

In terms of domain architecture, BPL/LPL catalytic spans 29-216 (PATQRVLFLW…AFFAHYGERV (188 aa)). Residues R71, 76–79 (GAVF), and K134 contribute to the ATP site. K134 provides a ligand contact to (R)-lipoate.

The protein belongs to the LplA family. As to quaternary structure, monomer.

Its subcellular location is the cytoplasm. The enzyme catalyses L-lysyl-[lipoyl-carrier protein] + (R)-lipoate + ATP = N(6)-[(R)-lipoyl]-L-lysyl-[lipoyl-carrier protein] + AMP + diphosphate + H(+). The protein operates within protein modification; protein lipoylation via exogenous pathway; protein N(6)-(lipoyl)lysine from lipoate: step 1/2. It participates in protein modification; protein lipoylation via exogenous pathway; protein N(6)-(lipoyl)lysine from lipoate: step 2/2. Catalyzes both the ATP-dependent activation of exogenously supplied lipoate to lipoyl-AMP and the transfer of the activated lipoyl onto the lipoyl domains of lipoate-dependent enzymes. This Escherichia coli (strain 55989 / EAEC) protein is Lipoate-protein ligase A.